The following is a 257-amino-acid chain: Acetylglutamate kinase (257 aa).

Residues 43–44, arginine 65, and asparagine 157 each bind substrate; that span reads GG. ATP-binding positions include 180–185 and 208–210; these read DVSGIL and IIT.

Belongs to the acetylglutamate kinase family. ArgB subfamily. In terms of assembly, homodimer.

The protein resides in the cytoplasm. It catalyses the reaction N-acetyl-L-glutamate + ATP = N-acetyl-L-glutamyl 5-phosphate + ADP. Its pathway is amino-acid biosynthesis; L-arginine biosynthesis; N(2)-acetyl-L-ornithine from L-glutamate: step 2/4. In terms of biological role, catalyzes the ATP-dependent phosphorylation of N-acetyl-L-glutamate. The sequence is that of Acetylglutamate kinase from Proteus mirabilis (strain HI4320).